The primary structure comprises 712 residues: Elongation factor G (712 aa).

The region spanning 8-290 (TRYRNIGISA…AVIEFLPSPT (283 aa)) is the tr-type G domain. Residues 17–24 (AHIDAGKT), 88–92 (DTPGH), and 142–145 (NKMD) contribute to the GTP site.

Belongs to the TRAFAC class translation factor GTPase superfamily. Classic translation factor GTPase family. EF-G/EF-2 subfamily.

The protein localises to the cytoplasm. Functionally, catalyzes the GTP-dependent ribosomal translocation step during translation elongation. During this step, the ribosome changes from the pre-translocational (PRE) to the post-translocational (POST) state as the newly formed A-site-bound peptidyl-tRNA and P-site-bound deacylated tRNA move to the P and E sites, respectively. Catalyzes the coordinated movement of the two tRNA molecules, the mRNA and conformational changes in the ribosome. The sequence is that of Elongation factor G from Acinetobacter baumannii (strain AB307-0294).